The primary structure comprises 175 residues: MGAAPSKIVETLLEDTNFDRDEIERLRKRFMKLDRDSSGSIDKNEFMSIPGVSANPLAGRIMEVFDADNSGDVDFQEFITGLSIFSGRGSKDEKLKFAFKIYDIDKDGLISNGELFIVLKIMVGSNLDDKQLQQIVDRTIMENDLDGDGQLSFEEFKSAIETTEVAKSLTLQYSV.

EF-hand domains follow at residues 21-56 (DEIERLRKRFMKLDRDSSGSIDKNEFMSIPGVSANP), 60-88 (RIMEVFDADNSGDVDFQEFITGLSIFSGR), 90-125 (SKDEKLKFAFKIYDIDKDGLISNGELFIVLKIMVGS), and 131-166 (QLQQIVDRTIMENDLDGDGQLSFEEFKSAIETTEVA). Ca(2+) contacts are provided by D34, D36, S38, S40, E45, D66, D68, S70, D72, E77, D103, D105, D107, E114, D144, D146, D148, Q150, and E155.

This sequence belongs to the calcineurin regulatory subunit family. Composed of a catalytic subunit (A) and a regulatory subunit (B).

In terms of biological role, regulatory subunit of calcineurin, a calcium-dependent, calmodulin stimulated protein phosphatase. Confers calcium sensitivity. This chain is Calcineurin subunit B (CNB1), found in Candida glabrata (strain ATCC 2001 / BCRC 20586 / JCM 3761 / NBRC 0622 / NRRL Y-65 / CBS 138) (Yeast).